The primary structure comprises 676 residues: UvrABC system protein C (676 aa).

In terms of domain architecture, GIY-YIG spans 16-95; it reads VEPGVYRFRD…IKEFDPRFNI (80 aa). The UVR domain occupies 208 to 243; sequence DRLVRDLERKMTAAAEDLDFERAARLRDDIGALRRA.

The protein belongs to the UvrC family. Interacts with UvrB in an incision complex.

It localises to the cytoplasm. Its function is as follows. The UvrABC repair system catalyzes the recognition and processing of DNA lesions. UvrC both incises the 5' and 3' sides of the lesion. The N-terminal half is responsible for the 3' incision and the C-terminal half is responsible for the 5' incision. This is UvrABC system protein C from Mycobacterium sp. (strain KMS).